Here is a 121-residue protein sequence, read N- to C-terminus: MDEIKEYLAKILENKIKISMIAKFKSVEEYEGRIFKDLFDVEMKNLEILYEKYLIYFNEKPNIKAEVDTNADVIEILKETIELEKFLAKKLGVNFGVRQAVIHALSDDERFLYFLTKKPYF.

This is an uncharacterized protein from Methanocaldococcus jannaschii (strain ATCC 43067 / DSM 2661 / JAL-1 / JCM 10045 / NBRC 100440) (Methanococcus jannaschii).